We begin with the raw amino-acid sequence, 228 residues long: LOB domain-containing protein 30 (228 aa).

One can recognise an LOB domain in the interval 16 to 118 (GPCGACKFLR…TELSYLQAHL (103 aa)). Positions 188-228 (SNMGGGGELQALAREFIHGGQMPAQPSPGTSGSASSVIKRE) are disordered. Over residues 214–228 (SPGTSGSASSVIKRE) the composition is skewed to polar residues.

The protein belongs to the LOB domain-containing protein family. In terms of tissue distribution, expressed in roots, stems, leaves and flowers. Expressed in vascular tissues of hypocotyls, leaves, roots, developing floral organs and siliques.

Involved in the positive regulation of tracheary element (TE) differentiation. Involved in a positive feedback loop that maintains or promotes NAC030/VND7 expression that regulates TE differentiation-related genes. In Arabidopsis thaliana (Mouse-ear cress), this protein is LOB domain-containing protein 30 (LBD30).